A 693-amino-acid polypeptide reads, in one-letter code: UvrABC system protein B (693 aa).

The 154-residue stretch at 35-188 folds into the Helicase ATP-binding domain; it reads ERIKNGEKDV…DDLLRKFVSM (154 aa). 48 to 55 provides a ligand contact to ATP; it reads GATGTGKS. The Beta-hairpin signature appears at 101-124; it reads YYDYYQPEAYVAQTDTFIEKDSSV. The Helicase C-terminal domain maps to 438–604; the sequence is QIDDLLGEIK…PLRKKIADIT (167 aa). Residues 648-683 form the UVR domain; the sequence is VGLIEQLTEQMHAAAGELQFELAARLRDEVGELKKE.

The protein belongs to the UvrB family. Forms a heterotetramer with UvrA during the search for lesions. Interacts with UvrC in an incision complex.

It localises to the cytoplasm. The UvrABC repair system catalyzes the recognition and processing of DNA lesions. A damage recognition complex composed of 2 UvrA and 2 UvrB subunits scans DNA for abnormalities. Upon binding of the UvrA(2)B(2) complex to a putative damaged site, the DNA wraps around one UvrB monomer. DNA wrap is dependent on ATP binding by UvrB and probably causes local melting of the DNA helix, facilitating insertion of UvrB beta-hairpin between the DNA strands. Then UvrB probes one DNA strand for the presence of a lesion. If a lesion is found the UvrA subunits dissociate and the UvrB-DNA preincision complex is formed. This complex is subsequently bound by UvrC and the second UvrB is released. If no lesion is found, the DNA wraps around the other UvrB subunit that will check the other stand for damage. The polypeptide is UvrABC system protein B (Arthrobacter sp. (strain FB24)).